The chain runs to 802 residues: MARLFSLKPLVLALGFCFGTHCAAADAVAAEETDNPTAGGSVRSVSEPIQPTSLSLGSTCLFCSNESGSPERTEAAVQGSGEASIPEDYTRIVADRMEGQSQVQVRAEGNVVVERNRTTLNADWADYDQSGDTVTAGDRFALQQDGTLIRGETLTYNLEQQTGEAHNVRMETEHGGRRLQSVSRTAEMLGEGHYKLTETQFNTCSAGDAGWYVKAASVEADREKGIGVAKHAAFVFGGVPIFYTPWADFPLDGNRKSGLLVPSLSAGSDGVSLSVPYYFNLAPNLDATFAPGVIGERGAVFDGQVRYLRPDYAGQSDLTWLPHDKKSGRNNRYQAKWQHRHDISDTLQAGVDFNQVSDSGYYRDFYGNKEIAGNVNLNRRVWLDYGGRAAGGSLNAGLSVLKYQTLANQSGYKDKPYALMPRLSADWRKNTGRAQIGVSAQFTRFSHDSRQDGSRLVVYPDIKWDFSNSWGYVRPKLGLHATYYSLNRFGSQEARRVSRTLPIVNIDSGMTFERNTRMFGGGVLQTLEPRLFYNYIPAKSQNDLPNFDSSESSFGYGQLFRENLYYGNDRINTANSLSAAVQSRILDGATGEERFRAGIGQKFYFKNDAVMLDGSVGKKPRSRSDWVAFASSGIGSRFILDSSIHYNQNDKRAENYAVGASYRPAQGKVLNARYKYGRNEKIYLKSDGSYFYDKLSQLDLSAQWPLTRNLSAVVRYNYGFEAKKPIEVLAGAEYKSSCGCWGAGVYAQRYVTGENTYKNAVFFSLQLKDLSSVGRNPADRMDVAVPGYIPAHSLSAGRNKRP.

The N-terminal stretch at 1–29 (MARLFSLKPLVLALGFCFGTHCAAADAVA) is a signal peptide.

Belongs to the LptD family. As to quaternary structure, component of the lipopolysaccharide transport and assembly complex. Interacts with LptE and LptA.

The protein localises to the cell outer membrane. Its function is as follows. Together with LptE, is involved in the assembly of lipopolysaccharide (LPS) at the surface of the outer membrane. The sequence is that of LPS-assembly protein LptD from Neisseria meningitidis serogroup A / serotype 4A (strain DSM 15465 / Z2491).